A 143-amino-acid chain; its full sequence is Transcriptional regulator MraZ (143 aa).

SpoVT-AbrB domains follow at residues 5–47 and 76–119; these read EYKH…SLKE and ACEC…SEEN.

It belongs to the MraZ family. In terms of assembly, forms oligomers.

It is found in the cytoplasm. The protein resides in the nucleoid. This is Transcriptional regulator MraZ from Caldicellulosiruptor saccharolyticus (strain ATCC 43494 / DSM 8903 / Tp8T 6331).